Here is a 344-residue protein sequence, read N- to C-terminus: Protein RecA (344 aa).

Glycine 65–threonine 72 lines the ATP pocket.

It belongs to the RecA family.

It is found in the cytoplasm. Functionally, can catalyze the hydrolysis of ATP in the presence of single-stranded DNA, the ATP-dependent uptake of single-stranded DNA by duplex DNA, and the ATP-dependent hybridization of homologous single-stranded DNAs. It interacts with LexA causing its activation and leading to its autocatalytic cleavage. This is Protein RecA from Nitratiruptor sp. (strain SB155-2).